The following is a 519-amino-acid chain: Tachykinin-like peptides receptor 99D (519 aa).

The Extracellular segment spans residues 1–100 (MENRSDFEAD…SFAFVVPWWR (100 aa)). 4 N-linked (GlcNAc...) asparagine glycosylation sites follow: N3, N19, N22, and N61. The chain crosses the membrane as a helical span at residues 101–123 (QVLWSILFGGMVIVATGGNLIVV). Topologically, residues 124–134 (WIVMTTKRMRT) are cytoplasmic. Residues 135–155 (VTNYFIVNLSIADAMVSSLNV) form a helical membrane-spanning segment. At 156 to 175 (TFNYYYMLDSDWPFGEFYCK) the chain is on the extracellular side. C174 and C254 are oxidised to a cystine. A helical membrane pass occupies residues 176-197 (LSQFIAMLSICASVFTLMAISI). The Cytoplasmic segment spans residues 198–217 (DRYVAIIRPLQPRMSKRCNL). Residues 218 to 238 (AIAAVIWLASTLISCPMMIIY) form a helical membrane-spanning segment. Topologically, residues 239-270 (RTEEVPVRGLSNRTVCYPEWPDGPTNHSTMES) are extracellular. The chain crosses the membrane as a helical span at residues 271–292 (LYNILIIILTYFLPIVSMTVTY). The Cytoplasmic segment spans residues 293–324 (SRVGIELWGSKTIGECTPRQVENVRSKRRVVK). Residues 325–346 (MMIVVVLIFAICWLPFHSYFII) traverse the membrane as a helical segment. Residues 347 to 361 (TSCYPAITEAPFIQE) lie on the Extracellular side of the membrane. The helical transmembrane segment at 362–384 (LYLAIYWLAMSNSMYNPIIYCWM) threads the bilayer. Topologically, residues 385–519 (NSRFRYGFKM…STANTTQLLS (135 aa)) are cytoplasmic. C399 carries S-palmitoyl cysteine lipidation. The segment at 444 to 519 (PSSPKSHRIS…STANTTQLLS (76 aa)) is disordered. Composition is skewed to polar residues over residues 454–465 (HSGTGRSATLRN) and 487–499 (SYQQEMQQRWSGP). Residues 500–519 (NSATAVTNSSSTANTTQLLS) are compositionally biased toward low complexity.

Belongs to the G-protein coupled receptor 1 family. During late embryogenesis (stages 11-15), expressed in the brain and in a specific subset of neurons in each neuromere of the developing ventral ganglion. Expressed in the cortex of the adult brain, which contains the neuronal cell bodies.

The protein localises to the cell membrane. Functionally, receptor for tachykinin-like peptides. In Drosophila melanogaster (Fruit fly), this protein is Tachykinin-like peptides receptor 99D (TkR99D).